Here is a 179-residue protein sequence, read N- to C-terminus: Large ribosomal subunit protein uL5 (179 aa).

This sequence belongs to the universal ribosomal protein uL5 family. As to quaternary structure, part of the 50S ribosomal subunit; part of the 5S rRNA/L5/L18/L25 subcomplex. Contacts the 5S rRNA and the P site tRNA. Forms a bridge to the 30S subunit in the 70S ribosome.

Functionally, this is one of the proteins that bind and probably mediate the attachment of the 5S RNA into the large ribosomal subunit, where it forms part of the central protuberance. In the 70S ribosome it contacts protein S13 of the 30S subunit (bridge B1b), connecting the 2 subunits; this bridge is implicated in subunit movement. Contacts the P site tRNA; the 5S rRNA and some of its associated proteins might help stabilize positioning of ribosome-bound tRNAs. The chain is Large ribosomal subunit protein uL5 from Burkholderia vietnamiensis (strain G4 / LMG 22486) (Burkholderia cepacia (strain R1808)).